The sequence spans 334 residues: Protein RecA (334 aa).

Residue 65–72 participates in ATP binding; sequence GNESSGKT.

The protein belongs to the RecA family.

The protein localises to the cytoplasm. Can catalyze the hydrolysis of ATP in the presence of single-stranded DNA, the ATP-dependent uptake of single-stranded DNA by duplex DNA, and the ATP-dependent hybridization of homologous single-stranded DNAs. It interacts with LexA causing its activation and leading to its autocatalytic cleavage. In Ureaplasma parvum serovar 3 (strain ATCC 27815 / 27 / NCTC 11736), this protein is Protein RecA.